Consider the following 185-residue polypeptide: Elongation factor P (185 aa).

The protein belongs to the elongation factor P family.

It is found in the cytoplasm. The protein operates within protein biosynthesis; polypeptide chain elongation. Its function is as follows. Involved in peptide bond synthesis. Stimulates efficient translation and peptide-bond synthesis on native or reconstituted 70S ribosomes in vitro. Probably functions indirectly by altering the affinity of the ribosome for aminoacyl-tRNA, thus increasing their reactivity as acceptors for peptidyl transferase. This is Elongation factor P from Endomicrobium trichonymphae.